The chain runs to 319 residues: Mitochondrial fission regulator 1-like (319 aa).

A disordered region spans residues 1-35; it reads MASLGAGAEPESVLFGKDGTEACESPEGRRSGRRK.

Belongs to the MTFR1 family.

The protein localises to the mitochondrion outer membrane. Mitochondrial protein required for adaptation of miochondrial dynamics to metabolic changes. Regulates mitochondrial morphology at steady state and mediates AMPK-dependent stress-induced mitochondrial fragmentation via the control of OPA1 levels. This Xenopus tropicalis (Western clawed frog) protein is Mitochondrial fission regulator 1-like (mtfr1l).